We begin with the raw amino-acid sequence, 288 residues long: Thymidylate synthase (288 aa).

Arg21 provides a ligand contact to dUMP. (6R)-5,10-methylene-5,6,7,8-tetrahydrofolate is bound at residue His51. Residue 150–151 participates in dUMP binding; that stretch reads RR. Cys170 serves as the catalytic Nucleophile. DUMP contacts are provided by residues 190–193, Asn201, and 231–233; these read RSGD and HIY. Residue Asp193 coordinates (6R)-5,10-methylene-5,6,7,8-tetrahydrofolate. (6R)-5,10-methylene-5,6,7,8-tetrahydrofolate is bound at residue Ala287.

The protein belongs to the thymidylate synthase family. Bacterial-type ThyA subfamily. In terms of assembly, homodimer.

The protein resides in the cytoplasm. The catalysed reaction is dUMP + (6R)-5,10-methylene-5,6,7,8-tetrahydrofolate = 7,8-dihydrofolate + dTMP. The protein operates within pyrimidine metabolism; dTTP biosynthesis. In terms of biological role, catalyzes the reductive methylation of 2'-deoxyuridine-5'-monophosphate (dUMP) to 2'-deoxythymidine-5'-monophosphate (dTMP) while utilizing 5,10-methylenetetrahydrofolate (mTHF) as the methyl donor and reductant in the reaction, yielding dihydrofolate (DHF) as a by-product. This enzymatic reaction provides an intracellular de novo source of dTMP, an essential precursor for DNA biosynthesis. This Mycoplasma mobile (strain ATCC 43663 / 163K / NCTC 11711) (Mesomycoplasma mobile) protein is Thymidylate synthase.